Consider the following 383-residue polypeptide: Acetylornithine deacetylase (383 aa).

Histidine 80 serves as a coordination point for Zn(2+). Aspartate 82 is an active-site residue. Aspartate 112 contacts Zn(2+). Glutamate 144 is an active-site residue. Zn(2+) is bound by residues glutamate 145, glutamate 169, and histidine 355.

It belongs to the peptidase M20A family. ArgE subfamily. Homodimer. It depends on Zn(2+) as a cofactor. The cofactor is Co(2+). Requires glutathione as cofactor.

The protein localises to the cytoplasm. It carries out the reaction N(2)-acetyl-L-ornithine + H2O = L-ornithine + acetate. It participates in amino-acid biosynthesis; L-arginine biosynthesis; L-ornithine from N(2)-acetyl-L-ornithine (linear): step 1/1. Functionally, catalyzes the hydrolysis of the amide bond of N(2)-acetylated L-amino acids. Cleaves the acetyl group from N-acetyl-L-ornithine to form L-ornithine, an intermediate in L-arginine biosynthesis pathway, and a branchpoint in the synthesis of polyamines. This is Acetylornithine deacetylase from Escherichia coli O17:K52:H18 (strain UMN026 / ExPEC).